A 232-amino-acid polypeptide reads, in one-letter code: UPF0758 protein Clos_1766 (232 aa).

The region spanning 110 to 232 (KIKGPDDVSN…YFSMKEHKLI (123 aa)) is the MPN domain. 3 residues coordinate Zn(2+): His181, His183, and Asp194. Residues 181-194 (HNHPSGDPNPSGED) carry the JAMM motif motif.

It belongs to the UPF0758 family.

The sequence is that of UPF0758 protein Clos_1766 from Alkaliphilus oremlandii (strain OhILAs) (Clostridium oremlandii (strain OhILAs)).